The primary structure comprises 140 residues: Protein ARABIDOPSIS THALIANA ANTHER 7 (140 aa).

A signal peptide spans 1-20 (MKIHAILVVAFLVLMKTAVS). Disulfide bonds link C29/C87, C39/C54, C55/C111, and C85/C125.

Belongs to the plant LTP family. As to expression, tapetum-specific. Also present in pollen.

The protein resides in the endoplasmic reticulum lumen. The sequence is that of Protein ARABIDOPSIS THALIANA ANTHER 7 from Arabidopsis thaliana (Mouse-ear cress).